The sequence spans 224 residues: LexA repressor (224 aa).

Positions 31-51 (RAEIANTLGFKSANAAEEHLQ) form a DNA-binding region, H-T-H motif. Residues serine 142 and lysine 179 each act as for autocatalytic cleavage activity in the active site.

This sequence belongs to the peptidase S24 family. As to quaternary structure, homodimer.

The catalysed reaction is Hydrolysis of Ala-|-Gly bond in repressor LexA.. Represses a number of genes involved in the response to DNA damage (SOS response), including recA and lexA. In the presence of single-stranded DNA, RecA interacts with LexA causing an autocatalytic cleavage which disrupts the DNA-binding part of LexA, leading to derepression of the SOS regulon and eventually DNA repair. The chain is LexA repressor from Delftia acidovorans (strain DSM 14801 / SPH-1).